We begin with the raw amino-acid sequence, 192 residues long: uncharacterized protein (192 aa).

In terms of domain architecture, Nudix hydrolase spans 29–160; it reads RRQAAVLIPV…PLDIYRRGDS (132 aa). The short motif at 67 to 89 is the Nudix box element; the sequence is GAVDSSDASLIAAALREAQEEVA. Residues E83 and E87 each contribute to the Mg(2+) site.

This sequence belongs to the Nudix hydrolase family. PCD1 subfamily. Mn(2+) serves as cofactor. Requires Mg(2+) as cofactor.

In terms of biological role, probably mediates the hydrolysis of some nucleoside diphosphate derivatives. This is an uncharacterized protein from Citrobacter koseri (strain ATCC BAA-895 / CDC 4225-83 / SGSC4696).